The following is a 247-amino-acid chain: Large ribosomal subunit protein uL24m (247 aa).

The 34-residue stretch at 84–117 folds into the KOW domain; it reads FFRGDRIEVLVGKDKGKQGIVTQVIPERNWVIVE.

The protein belongs to the universal ribosomal protein uL24 family. In terms of assembly, component of the mitochondrial ribosome large subunit (39S) which comprises a 16S rRNA and about 50 distinct proteins.

It localises to the mitochondrion. The sequence is that of Large ribosomal subunit protein uL24m (mRpL24) from Drosophila melanogaster (Fruit fly).